The primary structure comprises 365 residues: Chorismate synthase (365 aa).

Arginine 48 is an NADP(+) binding site. FMN-binding positions include 125 to 127, 238 to 239, glycine 278, 293 to 297, and arginine 319; these read RSS, NA, and KPTSS.

The protein belongs to the chorismate synthase family. Homotetramer. The cofactor is FMNH2.

The enzyme catalyses 5-O-(1-carboxyvinyl)-3-phosphoshikimate = chorismate + phosphate. It participates in metabolic intermediate biosynthesis; chorismate biosynthesis; chorismate from D-erythrose 4-phosphate and phosphoenolpyruvate: step 7/7. Catalyzes the anti-1,4-elimination of the C-3 phosphate and the C-6 proR hydrogen from 5-enolpyruvylshikimate-3-phosphate (EPSP) to yield chorismate, which is the branch point compound that serves as the starting substrate for the three terminal pathways of aromatic amino acid biosynthesis. This reaction introduces a second double bond into the aromatic ring system. The polypeptide is Chorismate synthase (Marinomonas sp. (strain MWYL1)).